The sequence spans 85 residues: Large ribosomal subunit protein uL29 (85 aa).

Belongs to the universal ribosomal protein uL29 family.

This is Large ribosomal subunit protein uL29 from Thermobifida fusca (strain YX).